A 485-amino-acid chain; its full sequence is Glutamyl-tRNA(Gln) amidotransferase subunit A (485 aa).

Active-site charge relay system residues include lysine 74 and serine 149. Catalysis depends on serine 173, which acts as the Acyl-ester intermediate.

It belongs to the amidase family. GatA subfamily. In terms of assembly, heterotrimer of A, B and C subunits.

The catalysed reaction is L-glutamyl-tRNA(Gln) + L-glutamine + ATP + H2O = L-glutaminyl-tRNA(Gln) + L-glutamate + ADP + phosphate + H(+). Functionally, allows the formation of correctly charged Gln-tRNA(Gln) through the transamidation of misacylated Glu-tRNA(Gln) in organisms which lack glutaminyl-tRNA synthetase. The reaction takes place in the presence of glutamine and ATP through an activated gamma-phospho-Glu-tRNA(Gln). This is Glutamyl-tRNA(Gln) amidotransferase subunit A from Herminiimonas arsenicoxydans.